The sequence spans 409 residues: S-adenosylmethionine synthase (409 aa).

His-15 is a binding site for ATP. Asp-17 contacts Mg(2+). Glu-43 contacts K(+). 2 residues coordinate L-methionine: Glu-56 and Gln-100. The tract at residues 100–110 (QSSDIAQGVNE) is flexible loop. ATP contacts are provided by residues 171-173 (DGK), 248-249 (KF), Asp-257, 263-264 (RK), Ala-280, and Lys-284. Residue Asp-257 coordinates L-methionine. Lys-288 provides a ligand contact to L-methionine.

It belongs to the AdoMet synthase family. In terms of assembly, homotetramer; dimer of dimers. The cofactor is Mg(2+). K(+) serves as cofactor.

The protein localises to the cytoplasm. It catalyses the reaction L-methionine + ATP + H2O = S-adenosyl-L-methionine + phosphate + diphosphate. It functions in the pathway amino-acid biosynthesis; S-adenosyl-L-methionine biosynthesis; S-adenosyl-L-methionine from L-methionine: step 1/1. In terms of biological role, catalyzes the formation of S-adenosylmethionine (AdoMet) from methionine and ATP. The overall synthetic reaction is composed of two sequential steps, AdoMet formation and the subsequent tripolyphosphate hydrolysis which occurs prior to release of AdoMet from the enzyme. This Prochlorococcus marinus (strain NATL2A) protein is S-adenosylmethionine synthase.